Reading from the N-terminus, the 199-residue chain is Probable adenine phosphoribosyltransferase (199 aa).

It belongs to the purine/pyrimidine phosphoribosyltransferase family. In terms of assembly, homodimer.

It is found in the cytoplasm. It catalyses the reaction AMP + diphosphate = 5-phospho-alpha-D-ribose 1-diphosphate + adenine. The protein operates within purine metabolism; AMP biosynthesis via salvage pathway; AMP from adenine: step 1/1. Its function is as follows. Catalyzes a salvage reaction resulting in the formation of AMP, that is energically less costly than de novo synthesis. This is Probable adenine phosphoribosyltransferase (aprt) from Dictyostelium discoideum (Social amoeba).